The chain runs to 353 residues: Protein pelota homolog (353 aa).

Belongs to the eukaryotic release factor 1 family. Pelota subfamily. In terms of assembly, monomer. A divalent metal cation is required as a cofactor.

It is found in the cytoplasm. Functionally, may function in recognizing stalled ribosomes, interact with stem-loop structures in stalled mRNA molecules, and effect endonucleolytic cleavage of the mRNA. May play a role in the release non-functional ribosomes and degradation of damaged mRNAs. Has endoribonuclease activity. The protein is Protein pelota homolog of Methanothermobacter thermautotrophicus (strain ATCC 29096 / DSM 1053 / JCM 10044 / NBRC 100330 / Delta H) (Methanobacterium thermoautotrophicum).